A 515-amino-acid polypeptide reads, in one-letter code: MFKFNKAAQQQRIDNRNSAVTGHDPFVRPPVPEKKVRNIMKKLHKANGLKRSNSAIEFDVSALTAANRRQIYSSNRSASSEQDNSDLSEHSEKSPLVSARLDNLARLFFSKSMPAETGSRDTIDSVLTTRPNIKYQYSALDSGNGIVERSPRERAQREKALNATQEWIQGANGRYEVIAHLDEIGSRHGKNWFLVTDASVRTDRLQTLLPLPPDCVAFEDLPPNECAREILMELLGSLHHPYIYPVLDLGFLRNSSYNYACLVTPFNSRGSLKDLIYKAQWNEPWARKYTRKPNGLPVSQVQRLGRQILEALLFLKERGFPLHGHLHSGNVILQNGAARLSGLENGLLGLSSRINAVMWSRSVTEIENVDIVCFGHLLYEMCTGQELTTPKPSMRVLEMELQHYPQIGQTRKQILEILGLIFEPPSGVCPSVEDLVLCDLFRSIDLRELRGPCFSTIKPSLSRSTLNLLQAVKKRQCASLGHSLSEANSPCTPPSTPHDRRTGVLPAPYEVFRMY.

The segment at 1-31 (MFKFNKAAQQQRIDNRNSAVTGHDPFVRPPV) is disordered. Residues 7-20 (AAQQQRIDNRNSAV) show a composition bias toward polar residues. S54 and S79 each carry phosphoserine. The span at 73–82 (SSNRSASSEQ) shows a compositional bias: polar residues. Residues 73 to 94 (SSNRSASSEQDNSDLSEHSEKS) are disordered. The interaction with Slo stretch occupies residues 191-203 (NWFLVTDASVRTD). The interval 483-503 (SLSEANSPCTPPSTPHDRRTG) is disordered.

Interacts specifically with Slo; which activates Slo activity. Interacts with 14-3-3-zeta when phosphorylated. Forms a heterotetrameric complex containing phosphorylated Slob, Slo and 14-3-3-zeta, which represses Slo activity due to the indirect interaction between Slo and 14-3-3-zeta. Phosphorylated. Phosphorylation of Ser-54 and Ser-79 is required for the interaction with 14-3-3-zeta but not with that of Slo. In terms of tissue distribution, expressed in head. In larval brain, it is expressed in the mushroom body. Also expressed in larval muscles.

It is found in the cytoplasm. Its function is as follows. Regulator of calcium-activated channel Slo. Increases or decreases the voltage sensitivity of Slo, depending on the absence or presence of 14-3-3-zeta in the complex, respectively. The protein is Slowpoke-binding protein (Slob) of Drosophila melanogaster (Fruit fly).